The primary structure comprises 555 residues: CTP synthase (555 aa).

The interval methionine 1 to isoleucine 271 is amidoligase domain. Serine 19 provides a ligand contact to CTP. Serine 19 lines the UTP pocket. ATP-binding positions include serine 20–leucine 25 and aspartate 77. Mg(2+) is bound by residues aspartate 77 and glutamate 145. CTP contacts are provided by residues aspartate 152–glutamate 154, lysine 192–glutamine 197, and lysine 228. UTP contacts are provided by residues lysine 192–glutamine 197 and lysine 228. One can recognise a Glutamine amidotransferase type-1 domain in the interval arginine 297–glutamine 538. Glycine 358 serves as a coordination point for L-glutamine. Cysteine 385 (nucleophile; for glutamine hydrolysis) is an active-site residue. L-glutamine-binding positions include leucine 386–glutamine 389, glutamate 409, and arginine 466. Active-site residues include histidine 511 and glutamate 513.

This sequence belongs to the CTP synthase family. In terms of assembly, homotetramer.

It carries out the reaction UTP + L-glutamine + ATP + H2O = CTP + L-glutamate + ADP + phosphate + 2 H(+). The enzyme catalyses L-glutamine + H2O = L-glutamate + NH4(+). The catalysed reaction is UTP + NH4(+) + ATP = CTP + ADP + phosphate + 2 H(+). The protein operates within pyrimidine metabolism; CTP biosynthesis via de novo pathway; CTP from UDP: step 2/2. Allosterically activated by GTP, when glutamine is the substrate; GTP has no effect on the reaction when ammonia is the substrate. The allosteric effector GTP functions by stabilizing the protein conformation that binds the tetrahedral intermediate(s) formed during glutamine hydrolysis. Inhibited by the product CTP, via allosteric rather than competitive inhibition. Functionally, catalyzes the ATP-dependent amination of UTP to CTP with either L-glutamine or ammonia as the source of nitrogen. Regulates intracellular CTP levels through interactions with the four ribonucleotide triphosphates. The sequence is that of CTP synthase from Anaeromyxobacter sp. (strain Fw109-5).